We begin with the raw amino-acid sequence, 379 residues long: Na(+)/H(+) antiporter NhaA (379 aa).

Helical transmembrane passes span 14-34, 59-79, 95-115, 125-145, 154-174, 175-195, 200-220, 221-241, 261-281, 292-312, 328-348, and 359-379; these read AGGI…NTPL, LLMW…GMEV, VFPA…FLVF, GWAI…ALLG, IFLL…IALF, FSHD…AILI, LKIT…ASVL, KSGV…PLNG, FAIL…GMGM, IALG…FVAV, IFAV…LAGL, and VTAL…VLGY.

Belongs to the NhaA Na(+)/H(+) (TC 2.A.33) antiporter family.

Its subcellular location is the cell inner membrane. It catalyses the reaction Na(+)(in) + 2 H(+)(out) = Na(+)(out) + 2 H(+)(in). In terms of biological role, na(+)/H(+) antiporter that extrudes sodium in exchange for external protons. The polypeptide is Na(+)/H(+) antiporter NhaA (Pasteurella multocida (strain Pm70)).